A 363-amino-acid polypeptide reads, in one-letter code: D-proline dehydrogenase (363 aa).

FAD is bound at residue 3-17; sequence VAIVGGGIIGLFTAY.

It belongs to the DadA oxidoreductase family. As to quaternary structure, homotetramer. Requires FAD as cofactor.

Its subcellular location is the cell membrane. The catalysed reaction is D-proline + A = 1-pyrroline-2-carboxylate + AH2. Functionally, catalyzes the dehydrogenation of D-proline. Can also use other D-amino acids, but with lower efficiency. This chain is D-proline dehydrogenase (dpdh), found in Pyrobaculum islandicum (strain DSM 4184 / JCM 9189 / GEO3).